We begin with the raw amino-acid sequence, 569 residues long: Proline--tRNA ligase (569 aa).

This sequence belongs to the class-II aminoacyl-tRNA synthetase family. ProS type 1 subfamily. As to quaternary structure, homodimer.

It is found in the cytoplasm. It catalyses the reaction tRNA(Pro) + L-proline + ATP = L-prolyl-tRNA(Pro) + AMP + diphosphate. In terms of biological role, catalyzes the attachment of proline to tRNA(Pro) in a two-step reaction: proline is first activated by ATP to form Pro-AMP and then transferred to the acceptor end of tRNA(Pro). As ProRS can inadvertently accommodate and process non-cognate amino acids such as alanine and cysteine, to avoid such errors it has two additional distinct editing activities against alanine. One activity is designated as 'pretransfer' editing and involves the tRNA(Pro)-independent hydrolysis of activated Ala-AMP. The other activity is designated 'posttransfer' editing and involves deacylation of mischarged Ala-tRNA(Pro). The misacylated Cys-tRNA(Pro) is not edited by ProRS. In Shewanella woodyi (strain ATCC 51908 / MS32), this protein is Proline--tRNA ligase.